A 208-amino-acid chain; its full sequence is Large ribosomal subunit protein uL4 (208 aa).

Residues 42-77 form a disordered region; the sequence is SMRQGTHKTKTKTEVSGGGRKPWRQKGTGRARQGSI.

Belongs to the universal ribosomal protein uL4 family. As to quaternary structure, part of the 50S ribosomal subunit.

In terms of biological role, one of the primary rRNA binding proteins, this protein initially binds near the 5'-end of the 23S rRNA. It is important during the early stages of 50S assembly. It makes multiple contacts with different domains of the 23S rRNA in the assembled 50S subunit and ribosome. Its function is as follows. Forms part of the polypeptide exit tunnel. This is Large ribosomal subunit protein uL4 from Spiroplasma kunkelii.